The primary structure comprises 849 residues: Lysine-specific histone demethylase 1 homolog 1 (849 aa).

The interval 1–118 (MEEGSEAQPP…RRRRKKQFPG (118 aa)) is disordered. Composition is skewed to low complexity over residues 34–67 (GQAA…AADA) and 89–103 (PTSS…VDDS). A compositionally biased stretch (basic residues) spans 106–115 (ARKRRRRKKQ). One can recognise an SWIRM domain in the interval 159–260 (ARELDAEALI…FGLAPSVISL (102 aa)). Glutamate 300, arginine 302, arginine 308, and glutamate 688 together coordinate FAD.

It belongs to the flavin monoamine oxidase family. FAD is required as a cofactor.

Functionally, probable histone demethylase. This Oryza sativa subsp. japonica (Rice) protein is Lysine-specific histone demethylase 1 homolog 1.